A 298-amino-acid chain; its full sequence is Porphobilinogen deaminase (298 aa).

Cys239 bears the S-(dipyrrolylmethanemethyl)cysteine mark.

Belongs to the HMBS family. Monomer. Dipyrromethane serves as cofactor.

It carries out the reaction 4 porphobilinogen + H2O = hydroxymethylbilane + 4 NH4(+). Its pathway is porphyrin-containing compound metabolism; protoporphyrin-IX biosynthesis; coproporphyrinogen-III from 5-aminolevulinate: step 2/4. In terms of biological role, tetrapolymerization of the monopyrrole PBG into the hydroxymethylbilane pre-uroporphyrinogen in several discrete steps. The chain is Porphobilinogen deaminase from Orientia tsutsugamushi (strain Boryong) (Rickettsia tsutsugamushi).